Reading from the N-terminus, the 299-residue chain is Ribosomal protein L11 methyltransferase (299 aa).

S-adenosyl-L-methionine contacts are provided by Thr139, Gly166, Asp188, and Asn231.

The protein belongs to the methyltransferase superfamily. PrmA family.

It is found in the cytoplasm. It catalyses the reaction L-lysyl-[protein] + 3 S-adenosyl-L-methionine = N(6),N(6),N(6)-trimethyl-L-lysyl-[protein] + 3 S-adenosyl-L-homocysteine + 3 H(+). Its function is as follows. Methylates ribosomal protein L11. This chain is Ribosomal protein L11 methyltransferase, found in Thermosynechococcus vestitus (strain NIES-2133 / IAM M-273 / BP-1).